Reading from the N-terminus, the 500-residue chain is Protein dcd1B (500 aa).

A signal peptide spans 1-20; it reads MNLIKLFIICCLLISITVKS. N-linked (GlcNAc...) asparagine glycosylation is found at Asn284, Asn331, Asn441, Asn459, Asn474, and Asn475. The interval 464-500 is disordered; that stretch reads FSEQPPLPPPNNSSSSDSNSNSNSDSSSSSDSNSNSN. Over residues 475–500 the composition is skewed to low complexity; the sequence is NSSSSDSNSNSNSDSSSSSDSNSNSN.

The protein resides in the secreted. This chain is Protein dcd1B (dcd1B), found in Dictyostelium discoideum (Social amoeba).